Here is a 146-residue protein sequence, read N- to C-terminus: Hemoglobin subunit beta-1 (146 aa).

In terms of domain architecture, Globin spans 2 to 146 (GLTAHDRQLI…IADALGKGYH (145 aa)). The heme b site is built by H63 and H92.

The protein belongs to the globin family. In terms of assembly, heterotetramer of two alpha chains and two beta chains. As to expression, red blood cells.

Involved in oxygen transport from the lung to the various peripheral tissues. The chain is Hemoglobin subunit beta-1 (hbb1) from Xenopus laevis (African clawed frog).